Reading from the N-terminus, the 204-residue chain is ADP-ribosylation factor-like protein 15 (204 aa).

GTP contacts are provided by residues 39-46, 82-86, and 142-145; these read GLTGSGKT, ELGGA, and NHQD.

This sequence belongs to the small GTPase superfamily. Arf family.

This Pongo abelii (Sumatran orangutan) protein is ADP-ribosylation factor-like protein 15 (ARL15).